The following is a 501-amino-acid chain: ATP synthase subunit alpha (501 aa).

169–176 (GDRQTGKT) is an ATP binding site.

This sequence belongs to the ATPase alpha/beta chains family. As to quaternary structure, F-type ATPases have 2 components, CF(1) - the catalytic core - and CF(0) - the membrane proton channel. CF(1) has five subunits: alpha(3), beta(3), gamma(1), delta(1), epsilon(1). CF(0) has three main subunits: a(1), b(2) and c(9-12). The alpha and beta chains form an alternating ring which encloses part of the gamma chain. CF(1) is attached to CF(0) by a central stalk formed by the gamma and epsilon chains, while a peripheral stalk is formed by the delta and b chains.

It localises to the cell inner membrane. It carries out the reaction ATP + H2O + 4 H(+)(in) = ADP + phosphate + 5 H(+)(out). In terms of biological role, produces ATP from ADP in the presence of a proton gradient across the membrane. The alpha chain is a regulatory subunit. The polypeptide is ATP synthase subunit alpha (Campylobacter lari (strain RM2100 / D67 / ATCC BAA-1060)).